The following is a 37-amino-acid chain: MTTLTTLPSIFVPLVGLVFPAIAMASLFLHVQKNKIF.

Residues 9 to 29 (SIFVPLVGLVFPAIAMASLFL) form a helical membrane-spanning segment.

Belongs to the PsaI family.

It localises to the plastid. Its subcellular location is the chloroplast thylakoid membrane. Functionally, may help in the organization of the PsaL subunit. This Cucumis sativus (Cucumber) protein is Photosystem I reaction center subunit VIII.